A 500-amino-acid polypeptide reads, in one-letter code: ATP synthase subunit alpha (500 aa).

169 to 176 (GDRQTGKT) contacts ATP.

This sequence belongs to the ATPase alpha/beta chains family. As to quaternary structure, F-type ATPases have 2 components, CF(1) - the catalytic core - and CF(0) - the membrane proton channel. CF(1) has five subunits: alpha(3), beta(3), gamma(1), delta(1), epsilon(1). CF(0) has three main subunits: a(1), b(2) and c(9-12). The alpha and beta chains form an alternating ring which encloses part of the gamma chain. CF(1) is attached to CF(0) by a central stalk formed by the gamma and epsilon chains, while a peripheral stalk is formed by the delta and b chains.

The protein resides in the cell membrane. The catalysed reaction is ATP + H2O + 4 H(+)(in) = ADP + phosphate + 5 H(+)(out). In terms of biological role, produces ATP from ADP in the presence of a proton gradient across the membrane. The alpha chain is a regulatory subunit. This is ATP synthase subunit alpha from Lactococcus lactis subsp. cremoris (strain SK11).